A 467-amino-acid polypeptide reads, in one-letter code: Histidine--tRNA ligase (467 aa).

This sequence belongs to the class-II aminoacyl-tRNA synthetase family. As to quaternary structure, homodimer.

Its subcellular location is the cytoplasm. It catalyses the reaction tRNA(His) + L-histidine + ATP = L-histidyl-tRNA(His) + AMP + diphosphate + H(+). This Gloeobacter violaceus (strain ATCC 29082 / PCC 7421) protein is Histidine--tRNA ligase.